Consider the following 92-residue polypeptide: Probable Fe(2+)-trafficking protein (92 aa).

The protein belongs to the Fe(2+)-trafficking protein family.

Its function is as follows. Could be a mediator in iron transactions between iron acquisition and iron-requiring processes, such as synthesis and/or repair of Fe-S clusters in biosynthetic enzymes. The polypeptide is Probable Fe(2+)-trafficking protein (Shewanella sp. (strain ANA-3)).